The following is a 265-amino-acid chain: Thiamine thiazole synthase (265 aa).

Residues A43, 62-63 (ER), G70, V134, and 162-164 (HVD) each bind NAD(+). Fe cation is bound by residues D164 and H179. Residue M229 coordinates NAD(+). Glycine is bound at residue R239.

The protein belongs to the THI4 family. Homooctamer; tetramer of dimers. Fe(2+) is required as a cofactor.

The catalysed reaction is hydrogen sulfide + glycine + NAD(+) = ADP-5-ethyl-4-methylthiazole-2-carboxylate + nicotinamide + 3 H2O + H(+). The protein operates within cofactor biosynthesis; thiamine diphosphate biosynthesis. In terms of biological role, involved in the biosynthesis of the thiazole moiety of thiamine. Catalyzes the conversion of NAD and glycine to adenosine diphosphate 5-(2-hydroxyethyl)-4-methylthiazole-2-carboxylate (ADT), an adenylated thiazole intermediate, using free sulfide as a source of sulfur. The chain is Thiamine thiazole synthase from Sulfolobus acidocaldarius (strain ATCC 33909 / DSM 639 / JCM 8929 / NBRC 15157 / NCIMB 11770).